Reading from the N-terminus, the 670-residue chain is Alpha-1,4-glucan:maltose-1-phosphate maltosyltransferase (670 aa).

K262, Q322, and D357 together coordinate alpha-maltose 1-phosphate. The active-site Nucleophile is D393. Residue N394 coordinates alpha-maltose 1-phosphate. The active-site Proton donor is E422. Residue 534 to 535 (KY) participates in alpha-maltose 1-phosphate binding.

This sequence belongs to the glycosyl hydrolase 13 family. GlgE subfamily. In terms of assembly, homodimer.

It carries out the reaction alpha-maltose 1-phosphate + [(1-&gt;4)-alpha-D-glucosyl](n) = [(1-&gt;4)-alpha-D-glucosyl](n+2) + phosphate. In terms of biological role, maltosyltransferase that uses maltose 1-phosphate (M1P) as the sugar donor to elongate linear or branched alpha-(1-&gt;4)-glucans. Is involved in a branched alpha-glucan biosynthetic pathway from trehalose, together with TreS, Mak and GlgB. The sequence is that of Alpha-1,4-glucan:maltose-1-phosphate maltosyltransferase from Chlorobaculum tepidum (strain ATCC 49652 / DSM 12025 / NBRC 103806 / TLS) (Chlorobium tepidum).